The chain runs to 396 residues: Elongation factor Tu (396 aa).

The 196-residue stretch at 10–205 (KSHANIGTIG…AVDEYIPTPE (196 aa)) folds into the tr-type G domain. The tract at residues 19–26 (GHVDHGKT) is G1. A GTP-binding site is contributed by 19–26 (GHVDHGKT). Residue Thr26 coordinates Mg(2+). Positions 61 to 65 (GITIS) are G2. The tract at residues 82-85 (DCPG) is G3. Residues 82-86 (DCPGH) and 137-140 (NKCD) each bind GTP. Residues 137 to 140 (NKCD) form a G4 region. The tract at residues 175 to 177 (SAL) is G5.

This sequence belongs to the TRAFAC class translation factor GTPase superfamily. Classic translation factor GTPase family. EF-Tu/EF-1A subfamily. As to quaternary structure, monomer.

It localises to the cytoplasm. It catalyses the reaction GTP + H2O = GDP + phosphate + H(+). In terms of biological role, GTP hydrolase that promotes the GTP-dependent binding of aminoacyl-tRNA to the A-site of ribosomes during protein biosynthesis. The sequence is that of Elongation factor Tu from Bacillus pumilus (strain SAFR-032).